A 246-amino-acid chain; its full sequence is Ribonuclease 3 (246 aa).

Residues 30–152 (ISWIEKNLGH…MIGAIFLESG (123 aa)) enclose the RNase III domain. Position 65 (Glu65) interacts with Mg(2+). Asp69 is a catalytic residue. Residues Asp138 and Glu141 each contribute to the Mg(2+) site. Glu141 is a catalytic residue. The region spanning 177–246 (HPKSALQEWA…AQALLDILAQ (70 aa)) is the DRBM domain.

It belongs to the ribonuclease III family. In terms of assembly, homodimer. Mg(2+) serves as cofactor.

It is found in the cytoplasm. It catalyses the reaction Endonucleolytic cleavage to 5'-phosphomonoester.. Its function is as follows. Digests double-stranded RNA. Involved in the processing of primary rRNA transcript to yield the immediate precursors to the large and small rRNAs (23S and 16S). Processes some mRNAs, and tRNAs when they are encoded in the rRNA operon. Processes pre-crRNA and tracrRNA of type II CRISPR loci if present in the organism. In Zymomonas mobilis subsp. mobilis (strain ATCC 31821 / ZM4 / CP4), this protein is Ribonuclease 3.